The following is a 263-amino-acid chain: MLPCFQLLRIGGGRGGDLYTFHPPSKSGCTYGLGCRADLCDVALRPQQEPGLISGVHAELHAELQGDDWRVSLEDHSSQGTLVNNVRLPRGHRLELSDGDLLTFGPQGQAGTSSSSEFYFMFQQVRVKPQDFAAITVPRSKGEAGGGFQPMLPPQGAPQRPLSTLSSAPKATLILNSIGSLSKLQAQPLTFSRGGGRPQGLAIPSQHGEAQVSPAPPTRNRRKSAHKVLAELDDEVSPGPLSVLTEPRKRLRVEKAALIASGE.

The FHA domain occupies 31–88 (YGLGCRADLCDVALRPQQEPGLISGVHAELHAELQGDDWRVSLEDHSSQGTLVNNVRL). Phosphoserine is present on serine 78. Disordered stretches follow at residues 140–164 (SKGE…PLST) and 189–225 (LTFS…RKSA).

The protein resides in the nucleus. Its function is as follows. Potential transcription factor that may play a role in the regulation of genes involved in cell cycle G1/S transition. May bind to regulatory elements of genes, including the promoter of the transcription factor FOXO1. The sequence is that of Transcription factor 19-like protein (Tcf19) from Mus musculus (Mouse).